A 274-amino-acid polypeptide reads, in one-letter code: Diaminopimelate epimerase (274 aa).

Residues asparagine 11, glutamine 44, and asparagine 64 each coordinate substrate. Cysteine 73 functions as the Proton donor in the catalytic mechanism. Substrate contacts are provided by residues 74-75 (GN), asparagine 157, asparagine 190, and 208-209 (ER). Cysteine 217 functions as the Proton acceptor in the catalytic mechanism. Substrate is bound at residue 218 to 219 (GS).

It belongs to the diaminopimelate epimerase family. In terms of assembly, homodimer.

It localises to the cytoplasm. The enzyme catalyses (2S,6S)-2,6-diaminopimelate = meso-2,6-diaminopimelate. Its pathway is amino-acid biosynthesis; L-lysine biosynthesis via DAP pathway; DL-2,6-diaminopimelate from LL-2,6-diaminopimelate: step 1/1. In terms of biological role, catalyzes the stereoinversion of LL-2,6-diaminopimelate (L,L-DAP) to meso-diaminopimelate (meso-DAP), a precursor of L-lysine and an essential component of the bacterial peptidoglycan. The polypeptide is Diaminopimelate epimerase (Mannheimia succiniciproducens (strain KCTC 0769BP / MBEL55E)).